The chain runs to 420 residues: Gamma-glutamyl phosphate reductase 2 (420 aa).

This sequence belongs to the gamma-glutamyl phosphate reductase family.

Its subcellular location is the cytoplasm. It catalyses the reaction L-glutamate 5-semialdehyde + phosphate + NADP(+) = L-glutamyl 5-phosphate + NADPH + H(+). It functions in the pathway amino-acid biosynthesis; L-proline biosynthesis; L-glutamate 5-semialdehyde from L-glutamate: step 2/2. Functionally, catalyzes the NADPH-dependent reduction of L-glutamate 5-phosphate into L-glutamate 5-semialdehyde and phosphate. The product spontaneously undergoes cyclization to form 1-pyrroline-5-carboxylate. This Synechocystis sp. (strain ATCC 27184 / PCC 6803 / Kazusa) protein is Gamma-glutamyl phosphate reductase 2.